Consider the following 247-residue polypeptide: Virulence plasmid protein pGP6-D (247 aa).

The protein belongs to the UPF0137 (pGP6-D) family.

In Chlamydia trachomatis, this protein is Virulence plasmid protein pGP6-D.